The primary structure comprises 113 residues: Colicin-E1 immunity protein (113 aa).

Its function is as follows. This protein is able to protect a cell, which harbors the plasmid ColE1 encoding colicin E1, against colicin E1. The protein is Colicin-E1 immunity protein (imm) of Escherichia coli.